Here is a 121-residue protein sequence, read N- to C-terminus: Large ribosomal subunit protein bL19 (121 aa).

This sequence belongs to the bacterial ribosomal protein bL19 family.

This protein is located at the 30S-50S ribosomal subunit interface and may play a role in the structure and function of the aminoacyl-tRNA binding site. The protein is Large ribosomal subunit protein bL19 of Mesomycoplasma hyopneumoniae (strain 232) (Mycoplasma hyopneumoniae).